Here is a 133-residue protein sequence, read N- to C-terminus: Large ribosomal subunit protein uL15 (133 aa).

Residues 1-64 (MGLENLKPAK…QPLQRRLPKI (64 aa)) form a disordered region.

The protein belongs to the universal ribosomal protein uL15 family. In terms of assembly, part of the 50S ribosomal subunit.

Its function is as follows. Binds to the 23S rRNA. The sequence is that of Large ribosomal subunit protein uL15 from Helicobacter pylori (strain J99 / ATCC 700824) (Campylobacter pylori J99).